The primary structure comprises 100 residues: Large ribosomal subunit protein uL23 (100 aa).

The protein belongs to the universal ribosomal protein uL23 family. Part of the 50S ribosomal subunit. Contacts protein L29, and trigger factor when it is bound to the ribosome.

One of the early assembly proteins it binds 23S rRNA. One of the proteins that surrounds the polypeptide exit tunnel on the outside of the ribosome. Forms the main docking site for trigger factor binding to the ribosome. The chain is Large ribosomal subunit protein uL23 from Yersinia pestis bv. Antiqua (strain Antiqua).